The chain runs to 229 residues: UPF0758 protein Moth_0536 (229 aa).

In terms of domain architecture, MPN spans 107–229 (VIRNPRDVAG…FTSLKERNLL (123 aa)). His-178, His-180, and Asp-191 together coordinate Zn(2+). Positions 178–191 (HNHPSGDPTPSQED) match the JAMM motif motif.

It belongs to the UPF0758 family.

This is UPF0758 protein Moth_0536 from Moorella thermoacetica (strain ATCC 39073 / JCM 9320).